The sequence spans 760 residues: General transcription and DNA repair factor IIH helicase subunit XPD (760 aa).

The region spanning 7–283 is the Helicase ATP-binding domain; it reads GLLVYFPYDY…KETDEQRLRE (277 aa). Residue 42-49 coordinates ATP; that stretch reads MPSGTGKT. [4Fe-4S] cluster contacts are provided by Cys116, Cys134, Cys155, and Cys190. A DEAH box motif is present at residues 234-237; the sequence is DEAH. The interval 438 to 637 is mediates interaction with MMS19; sequence MDASLAIKPV…TQSRILKARL (200 aa). Residues 682-695 carry the Nuclear localization signal motif; that stretch reads KRFARADKRGKLPR.

Belongs to the helicase family. RAD3/XPD subfamily. In terms of assembly, component of the 7-subunit TFIIH core complex composed of XPB/ERCC3, XPD/ERCC2, GTF2H1, GTF2H2, GTF2H3, GTF2H4 and GTF2H5, which is active in NER. The core complex associates with the 3-subunit CDK-activating kinase (CAK) module composed of CCNH/cyclin H, CDK7 and MNAT1 to form the 10-subunit holoenzyme (holo-TFIIH) active in transcription. The interaction with GTF2H2 results in the stimulation of the 5'--&gt;3' helicase activity. Component of the MMXD complex, which includes CIAO1, ERCC2, CIAO2B, MMS19 and SLC25A5. Interacts with CIAO1 and CIAO2B; the interaction WITH CIAO2B is direct. Interacts with ATF7IP. Interacts directly with MMS19. Part of TBP-based Pol II pre-initiation complex (PIC), in which Pol II core assembles with general transcription factors and other specific initiation factors including GTF2E1, GTF2E2, GTF2F1, GTF2F2, TCEA1, ERCC2, ERCC3, GTF2H2, GTF2H3, GTF2H4, GTF2H5, GTF2A1, GTF2A2, GTF2B and TBP; this large multi-subunit PIC complex mediates DNA unwinding and targets Pol II core to the transcription start site where the first phosphodiester bond forms. The cofactor is Mg(2+). [4Fe-4S] cluster is required as a cofactor. ISGylated.

It is found in the nucleus. Its subcellular location is the cytoplasm. The protein localises to the cytoskeleton. It localises to the spindle. It catalyses the reaction Couples ATP hydrolysis with the unwinding of duplex DNA at the replication fork by translocating in the 5'-3' direction. This creates two antiparallel DNA single strands (ssDNA). The leading ssDNA polymer is the template for DNA polymerase III holoenzyme which synthesizes a continuous strand.. The catalysed reaction is ATP + H2O = ADP + phosphate + H(+). In terms of biological role, ATP-dependent 5'-3' DNA helicase, component of the general transcription and DNA repair factor IIH (TFIIH) core complex, which is involved in general and transcription-coupled nucleotide excision repair (NER) of damaged DNA and, when complexed to CDK-activating kinase (CAK), involved in transcription by RNA polymerase II. In NER, TFIIH acts by opening DNA around the lesion to allow the excision of the damaged oligonucleotide and its replacement by a new DNA fragment. The ATP-dependent helicase activity of XPD/ERCC2 is required for DNA opening. In transcription, TFIIH has an essential role in transcription initiation. When the pre-initiation complex (PIC) has been established, TFIIH is required for promoter opening and promoter escape. Phosphorylation of the C-terminal tail (CTD) of the largest subunit of RNA polymerase II by the kinase module CAK controls the initiation of transcription. XPD/ERCC2 acts by forming a bridge between CAK and the core-TFIIH complex. Involved in the regulation of vitamin-D receptor activity. As part of the mitotic spindle-associated MMXD complex it plays a role in chromosome segregation. Might have a role in aging process and could play a causative role in the generation of skin cancers. This is General transcription and DNA repair factor IIH helicase subunit XPD (ERCC2) from Bos taurus (Bovine).